The sequence spans 158 residues: MKNHLFFWGVLAIFVQAVLVTAGDEGERIVLADNKCKCVRVTSRIIPSPENPNEDILERHIRIIIPVNSRENISDPTSPVRTKFVYHLSDLCKKCDPVEVELDNQVVTASQSNICDEDSETCYAYDRNKCYTNRVPLTYGGQTKIVETALTPDSCYPD.

Residues 1–22 form the signal peptide; sequence MKNHLFFWGVLAIFVQAVLVTA. Cystine bridges form between C36-C122, C95-C115, and C130-C155. N72 is a glycosylation site (N-linked (GlcNAc...) (complex) asparagine).

Part of the secretory IgA (sIgA) complex that consists of two, four or five IgA monomers, and two additional non-Ig polypeptides, namely the JCHAIN and the secretory component (the proteolytic product of PIGR). Part of the secretory IgM (sIgM) complex that consist of five IgM monomers, and two additional non-Ig polypeptides, namely the JCHAIN and the secretory component (the proteolytic product of PIGR). JCHAIN-containing IgM interacts (via CH4 domain) with FCRM (via Ig-like domain). In terms of processing, N-glycosylated. N-glycans attached to Asn-72 varies from truncated, differentially fucosylated to sialylated (NeuGc) complex types: Man3GlcNAc2; GlcNAc2Man3GlcNAc2(Fuc); Gal1GlcNAc1Man3GlcNAc2; GlcNAc2Man3GlcNAc2; GlcNAc1Man3GlcNAc2; GlcNAc1Man2GlcNAc2 and NeuGc1Gal1GlcNAc2Man3GlcNAc2.

It localises to the secreted. Serves to link two monomer units of either IgM or IgA. In the case of IgM, the J chain-joined dimer is a nucleating unit for the IgM pentamer, and in the case of IgA it induces dimers and/or larger polymers. It also helps to bind these immunoglobulins to secretory component. This Equus asinus (Donkey) protein is Immunoglobulin J chain (JCHAIN).